A 100-amino-acid chain; its full sequence is Small ribosomal subunit protein uS14c (100 aa).

Belongs to the universal ribosomal protein uS14 family. In terms of assembly, part of the 30S ribosomal subunit.

The protein resides in the plastid. Its subcellular location is the chloroplast. Binds 16S rRNA, required for the assembly of 30S particles. This Oenothera argillicola (Appalachian evening primrose) protein is Small ribosomal subunit protein uS14c.